Here is a 364-residue protein sequence, read N- to C-terminus: Tubulin alpha-2 chain (364 aa).

GTP is bound by residues Gly-59, Thr-60, Thr-94, Asn-121, and Asn-144. Glu-170 is a catalytic residue.

Belongs to the tubulin family. Dimer of alpha and beta chains. A typical microtubule is a hollow water-filled tube with an outer diameter of 25 nm and an inner diameter of 15 nM. Alpha-beta heterodimers associate head-to-tail to form protofilaments running lengthwise along the microtubule wall with the beta-tubulin subunit facing the microtubule plus end conferring a structural polarity. Microtubules usually have 13 protofilaments but different protofilament numbers can be found in some organisms and specialized cells. The cofactor is Mg(2+). Post-translationally, undergoes a tyrosination/detyrosination cycle, the cyclic removal and re-addition of a C-terminal tyrosine residue by the enzymes tubulin tyrosine carboxypeptidase (TTCP) and tubulin tyrosine ligase (TTL), respectively.

Its subcellular location is the cytoplasm. The protein resides in the cytoskeleton. The catalysed reaction is GTP + H2O = GDP + phosphate + H(+). Functionally, tubulin is the major constituent of microtubules, a cylinder consisting of laterally associated linear protofilaments composed of alpha- and beta-tubulin heterodimers. Microtubules grow by the addition of GTP-tubulin dimers to the microtubule end, where a stabilizing cap forms. Below the cap, tubulin dimers are in GDP-bound state, owing to GTPase activity of alpha-tubulin. The chain is Tubulin alpha-2 chain (TUBA2) from Anemia phyllitidis (Fern).